A 456-amino-acid polypeptide reads, in one-letter code: Signal recognition particle 54 kDa protein (456 aa).

Residues 104 to 111, 184 to 188, and 242 to 245 each bind GTP; these read GLYGNGKT, DTSGR, and TKMD.

Belongs to the GTP-binding SRP family. SRP54 subfamily. In terms of assembly, part of the signal recognition particle protein translocation system, which is composed of SRP and FtsY. Archaeal SRP consists of a 7S RNA molecule of 300 nucleotides and two protein subunits: SRP54 and SRP19.

It localises to the cytoplasm. It catalyses the reaction GTP + H2O = GDP + phosphate + H(+). In terms of biological role, involved in targeting and insertion of nascent membrane proteins into the cytoplasmic membrane. Binds to the hydrophobic signal sequence of the ribosome-nascent chain (RNC) as it emerges from the ribosomes. The SRP-RNC complex is then targeted to the cytoplasmic membrane where it interacts with the SRP receptor FtsY. In Thermoplasma acidophilum (strain ATCC 25905 / DSM 1728 / JCM 9062 / NBRC 15155 / AMRC-C165), this protein is Signal recognition particle 54 kDa protein.